Reading from the N-terminus, the 1459-residue chain is ARF guanine-nucleotide exchange factor 2 (1459 aa).

2 positions are modified to phosphoserine: S46 and S284. Residues 570 to 714 (FNEKPKKGIP…IIMLNTDLHN (145 aa)) form the SEC7 domain. Residues 1412 to 1459 (EKGNGSSSHGSAHEQTPESNDVEIEATAPIDDNTDDDNKPKLSDVEKD) are disordered. A compositionally biased stretch (basic and acidic residues) spans 1447–1459 (DDNKPKLSDVEKD).

In terms of assembly, interacts (via SEC7 domain) with DRS2 (via C-terminus); the interaction is direct. Interacts with GMH1.

The protein resides in the cytoplasm. The protein localises to the cytosol. It is found in the membrane. It localises to the golgi apparatus membrane. Its function is as follows. Activates the ARF proteins by exchanging bound GDP for free GTP. Plays a role in maintaining mitochondrial morphology. Stimulates DRS2 flippase activity. This is ARF guanine-nucleotide exchange factor 2 (GEA2) from Saccharomyces cerevisiae (strain ATCC 204508 / S288c) (Baker's yeast).